A 209-amino-acid chain; its full sequence is Large ribosomal subunit protein bL25 (209 aa).

A disordered region spans residues 190 to 209; the sequence is GLKSADDEAEGEDAEEAAAE. Residues 196–209 are compositionally biased toward acidic residues; sequence DEAEGEDAEEAAAE.

The protein belongs to the bacterial ribosomal protein bL25 family. CTC subfamily. Part of the 50S ribosomal subunit; part of the 5S rRNA/L5/L18/L25 subcomplex. Contacts the 5S rRNA. Binds to the 5S rRNA independently of L5 and L18.

In terms of biological role, this is one of the proteins that binds to the 5S RNA in the ribosome where it forms part of the central protuberance. The polypeptide is Large ribosomal subunit protein bL25 (Ruegeria sp. (strain TM1040) (Silicibacter sp.)).